Consider the following 97-residue polypeptide: Core protein A15 homolog (97 aa).

The protein belongs to the chordopoxvirinae A15 family. As to quaternary structure, part of a complex composed of A30, G7, F10 kinase, A15, D2, D3, and J1.

It is found in the host cytoplasm. The protein localises to the virion. Functionally, late protein which is a part of a large complex required for early virion morphogenesis. This complex participates in the formation of virosomes and the incorporation of virosomal contents into nascent immature virions. A15 is required for the stability and kinase activity of F10. This Vertebrata (FPV) protein is Core protein A15 homolog.